Reading from the N-terminus, the 305-residue chain is tRNA-cytidine(32) 2-sulfurtransferase (305 aa).

Residues 1–20 (MTAVLPLPHPLADPAPRDPR) form a disordered region. A PP-loop motif motif is present at residues 59–64 (SGGKDS). 3 residues coordinate [4Fe-4S] cluster: Cys134, Cys137, and Cys225. Over residues 282–293 (DAPPDLAPDPGA) the composition is skewed to low complexity. Positions 282–305 (DAPPDLAPDPGAWLTASDATHDSD) are disordered.

This sequence belongs to the TtcA family. As to quaternary structure, homodimer. It depends on Mg(2+) as a cofactor. Requires [4Fe-4S] cluster as cofactor.

It is found in the cytoplasm. It catalyses the reaction cytidine(32) in tRNA + S-sulfanyl-L-cysteinyl-[cysteine desulfurase] + AH2 + ATP = 2-thiocytidine(32) in tRNA + L-cysteinyl-[cysteine desulfurase] + A + AMP + diphosphate + H(+). The protein operates within tRNA modification. Catalyzes the ATP-dependent 2-thiolation of cytidine in position 32 of tRNA, to form 2-thiocytidine (s(2)C32). The sulfur atoms are provided by the cysteine/cysteine desulfurase (IscS) system. The protein is tRNA-cytidine(32) 2-sulfurtransferase of Xanthomonas oryzae pv. oryzae (strain PXO99A).